The following is a 226-amino-acid chain: MKDIRIAIDGPASSGKSTVAKIIAKNLGYTYLDTGAMYRSATYLALQNGLTEENVPEILDQLSQNPISFGKAADGSPKVYVGDVDITHPIRDNQVTNNVSWVAAIPEVRQELVSQQQRIAQEGGIIMDGRDIGTVVLPDAELKIFMIASVDERAERRYKENIEKGIPADLETLKKEIAERDYKDSHREVSPLRPAEDAITFDTTGVSIDGVVEFIQEKAKKIIDKG.

Position 10–18 (10–18 (GPASSGKST)) interacts with ATP.

It belongs to the cytidylate kinase family. Type 1 subfamily.

It localises to the cytoplasm. The enzyme catalyses CMP + ATP = CDP + ADP. The catalysed reaction is dCMP + ATP = dCDP + ADP. In Streptococcus thermophilus (strain CNRZ 1066), this protein is Cytidylate kinase.